Consider the following 181-residue polypeptide: Adenine phosphoribosyltransferase (181 aa).

This sequence belongs to the purine/pyrimidine phosphoribosyltransferase family. In terms of assembly, homodimer.

The protein resides in the cytoplasm. It carries out the reaction AMP + diphosphate = 5-phospho-alpha-D-ribose 1-diphosphate + adenine. It functions in the pathway purine metabolism; AMP biosynthesis via salvage pathway; AMP from adenine: step 1/1. Its function is as follows. Catalyzes a salvage reaction resulting in the formation of AMP, that is energically less costly than de novo synthesis. The protein is Adenine phosphoribosyltransferase of Psychromonas ingrahamii (strain DSM 17664 / CCUG 51855 / 37).